A 346-amino-acid polypeptide reads, in one-letter code: Putative agmatine deiminase (346 aa).

The active-site Amidino-cysteine intermediate is the Cys338.

This sequence belongs to the agmatine deiminase family.

The enzyme catalyses agmatine + H2O = N-carbamoylputrescine + NH4(+). This is Putative agmatine deiminase from Streptomyces avermitilis (strain ATCC 31267 / DSM 46492 / JCM 5070 / NBRC 14893 / NCIMB 12804 / NRRL 8165 / MA-4680).